Consider the following 457-residue polypeptide: Alkylcitrate synthase phiJ (457 aa).

Active-site residues include His328 and Asp384.

Belongs to the citrate synthase family.

It carries out the reaction (2E,10E)-dode-2,10-dicenoyl-CoA + oxaloacetate + H2O = (4E,11E)-2-hydroxytrideca-4,11-dien-1,2,3-tricarboxylate + CoA + H(+). It functions in the pathway secondary metabolite biosynthesis. Its function is as follows. Alkylcitrate synthase; part of the gene cluster that mediates the biosynthesis of the antihypercholesterolemic agents phomoidrides which are dimeric anhydrides. Within the pathway, the alkylcitrate synthase (ACS) phiJ and the alkylcitrate dehydratase (ACDH) phiI produce the decarboxylated monomeric anhydrides by coupling the C12-fatty acyl product from phiA with oxalacetic acid. The pathway begins with the highly reducing polyketide synthase phiA that catalyzes the formation of a C12-fatty acyl-ACP, starting from one acetate and 5 malonate units. The hydrolase phiM is involved in the release of the C12-fatty acyl chain from phiA. The alkylcitrate synthase (ACS) phiJ and the alkylcitrate dehydratase (ACDH) phiI then give rise to decarboxylated monomeric anhydrides by coupling the C12-fatty acyl chain with oxalacetic acid. The cyclase phiC is responsible for the dimerization of the monomeric anhydrides which leads to the production of prephomoidride that contains the characteristic bicyclo[4.3.1]deca-1,6-diene system of phomoidrides. Iterative oxidation catalyzed by the alpha-ketoglutarate-dependent dioxygenase phiK produced then phomoidride A. Finally, the methyltransferase phiE converts phomoidride A to phomoidride B via an acetalization reaction. The phosphatidylethanolamine-binding protein phiB and phiN are not essential for dimerization and their functions have still to be determined. The polypeptide is Alkylcitrate synthase phiJ (Fungal sp. (strain ATCC 74256)).